Reading from the N-terminus, the 336-residue chain is Glucokinase (336 aa).

Position 13–18 (13–18 (ADVGGT)) interacts with ATP.

Belongs to the bacterial glucokinase family.

The protein resides in the cytoplasm. It carries out the reaction D-glucose + ATP = D-glucose 6-phosphate + ADP + H(+). The chain is Glucokinase from Cupriavidus metallidurans (strain ATCC 43123 / DSM 2839 / NBRC 102507 / CH34) (Ralstonia metallidurans).